Reading from the N-terminus, the 595-residue chain is Neuroepithelial cell-transforming gene 1 protein (595 aa).

Position 1 is an N-acetylmethionine (M1). Residues 1-42 (MEPEPAAQKQPRPRRRSRRVSMLSEEPAAGLPADTPGPAANE) form a disordered region. The tract at residues 1-74 (MEPEPAAQKQ…LKRKRREKDD (74 aa)) is necessary for nuclear localization. Residues 12–19 (RPRRRSRR) carry the Nuclear localization signal motif. At S21 the chain carries Phosphoserine. The short motif at 66 to 72 (KRKRREK) is the Nuclear localization signal element. Phosphoserine is present on residues S100, S106, and S122. A disordered region spans residues 127 to 151 (GDHRSPASAQKSFSRSTVPTPTKRR). Polar residues predominate over residues 133 to 146 (ASAQKSFSRSTVPT). The DH domain maps to 174 to 356 (KRQEAIYELS…QGVLSDINLK (183 aa)). The 116-residue stretch at 386-501 (VLLCHGELKN…WFNCIRAAIA (116 aa)) folds into the PH domain. Residue S508 is modified to Phosphoserine. Residues 555–595 (CGSSVQTVEDTRNMKAQRPQPGLRRARDKAQSGGKKKETLV) form a disordered region.

Interacts with RHOA in its GTP- and GDP-bound states, and with CDC42 in its GTP-bound state. Interacts with the PDZ 1 domain of BAIAP1.

It is found in the cytoplasm. The protein localises to the nucleus. In terms of biological role, acts as a guanine nucleotide exchange factor (GEF) for RhoA GTPase. May be involved in activation of the SAPK/JNK pathway. Stimulates genotoxic stress-induced RHOB activity in breast cancer cells leading to their cell death. The polypeptide is Neuroepithelial cell-transforming gene 1 protein (Net1) (Mus musculus (Mouse)).